Reading from the N-terminus, the 397-residue chain is ATP-dependent RNA helicase RhlB (397 aa).

Positions 9–37 (TRFHDFNLAPSLMHAIHDLGFPYCTPIQA) match the Q motif motif. Positions 40 to 220 (LGFTLRGQDA…KQWTVDPAIV (181 aa)) constitute a Helicase ATP-binding domain. 53-60 (AQTGTGKT) lines the ATP pocket. A DEAD box motif is present at residues 166-169 (DEAD). Positions 243–393 (DKYKLLYNLV…MPPAELLKPV (151 aa)) constitute a Helicase C-terminal domain.

This sequence belongs to the DEAD box helicase family. RhlB subfamily. In terms of assembly, component of the RNA degradosome, which is a multiprotein complex involved in RNA processing and mRNA degradation.

The protein resides in the cytoplasm. It carries out the reaction ATP + H2O = ADP + phosphate + H(+). Its function is as follows. DEAD-box RNA helicase involved in RNA degradation. Has RNA-dependent ATPase activity and unwinds double-stranded RNA. In Pseudomonas aeruginosa (strain UCBPP-PA14), this protein is ATP-dependent RNA helicase RhlB.